Here is a 201-residue protein sequence, read N- to C-terminus: Single-stranded DNA-binding protein DdrA (201 aa).

This sequence belongs to the RAD52 family. As to quaternary structure, the truncated form (1-160) of DdrA forms heptameric rings that can assemble into a 3-ring structure.

Its function is as follows. ssDNA-binding protein that contributes to the ionizing radiation resistance of D.deserti. Plays a role in DNA repair and genome reconstitution, in a RecA-independent process, since DdrA is essential for recovery from severe genomic fragmentation as a result of exposure to severe levels of ionizing radiation in an environment lacking nutrients. In vitro, binds to the 3'-ends of single-stranded DNA, and probably protects them from nuclease degradation. Thus, DdrA is part of a DNA end-protection system that helps to preserve genome integrity following irradiation or desiccation. This Deinococcus deserti (strain DSM 17065 / CIP 109153 / LMG 22923 / VCD115) protein is Single-stranded DNA-binding protein DdrA (ddrA).